A 460-amino-acid polypeptide reads, in one-letter code: Cysteine--tRNA ligase (460 aa).

Cys-28 is a binding site for Zn(2+). A 'HIGH' region motif is present at residues 30 to 40; the sequence is MTVYDYCHLGH. 3 residues coordinate Zn(2+): Cys-209, His-234, and Glu-238. The short motif at 266–270 is the 'KMSKS' region element; that stretch reads KMSKS. Lys-269 serves as a coordination point for ATP.

This sequence belongs to the class-I aminoacyl-tRNA synthetase family. In terms of assembly, monomer. Zn(2+) serves as cofactor.

It is found in the cytoplasm. The catalysed reaction is tRNA(Cys) + L-cysteine + ATP = L-cysteinyl-tRNA(Cys) + AMP + diphosphate. The polypeptide is Cysteine--tRNA ligase (Pseudomonas fluorescens (strain ATCC BAA-477 / NRRL B-23932 / Pf-5)).